The chain runs to 188 residues: Peptidyl-tRNA hydrolase (188 aa).

Tyrosine 14 is a tRNA binding site. The active-site Proton acceptor is the histidine 19. TRNA contacts are provided by tyrosine 64, asparagine 66, and asparagine 112.

It belongs to the PTH family. As to quaternary structure, monomer.

The protein resides in the cytoplasm. The catalysed reaction is an N-acyl-L-alpha-aminoacyl-tRNA + H2O = an N-acyl-L-amino acid + a tRNA + H(+). Its function is as follows. Hydrolyzes ribosome-free peptidyl-tRNAs (with 1 or more amino acids incorporated), which drop off the ribosome during protein synthesis, or as a result of ribosome stalling. In terms of biological role, catalyzes the release of premature peptidyl moieties from peptidyl-tRNA molecules trapped in stalled 50S ribosomal subunits, and thus maintains levels of free tRNAs and 50S ribosomes. The polypeptide is Peptidyl-tRNA hydrolase (Bacillus licheniformis (strain ATCC 14580 / DSM 13 / JCM 2505 / CCUG 7422 / NBRC 12200 / NCIMB 9375 / NCTC 10341 / NRRL NRS-1264 / Gibson 46)).